The primary structure comprises 172 residues: Translocon-associated protein subunit delta (172 aa).

A signal peptide spans 1–24 (MAALASLGALALLLLSGLSCCSEA). Cysteines 25 and 56 form a disulfide. At 25–143 (CVEPQITPSY…SVDHRGTWNG (119 aa)) the chain is on the lumenal side. Lysine 72 participates in a covalent cross-link: Glycyl lysine isopeptide (Lys-Gly) (interchain with G-Cter in ubiquitin). A helical membrane pass occupies residues 144 to 164 (PWVSTEVLAAAIGLVIYYLAF). Over 165-172 (SAKSHIQA) the chain is Cytoplasmic.

It belongs to the TRAP-delta family. As to quaternary structure, heterotetramer of TRAP-alpha, TRAP-beta, TRAP-delta and TRAP-gamma.

The protein resides in the endoplasmic reticulum membrane. TRAP proteins are part of a complex whose function is to bind calcium to the ER membrane and thereby regulate the retention of ER resident proteins. The polypeptide is Translocon-associated protein subunit delta (SSR4) (Bos taurus (Bovine)).